A 206-amino-acid polypeptide reads, in one-letter code: MKTILAVIFFGILAFAFADYPSIPKCTHPPAMANFNQKKFLEGKWYVTKAKHGSNSTVCREYRAKTKGNDQILVGDGYYSFNGGTFYFTVRCKRLPNKEVQKPLQFTCTQKSPDDPSKMFKFQLEVTILDTDYANYAVMYRCVQFPEELGSHFEDNTLLLHRKLDQLVDENLIERKLKLSLPSFKSRDDVVEGCRELPSKKKKTKP.

The N-terminal stretch at 1 to 18 (MKTILAVIFFGILAFAFA) is a signal peptide. The N-linked (GlcNAc...) asparagine glycan is linked to Asn55.

It belongs to the calycin superfamily. Triabin family. Interacts with host coagulation factor XII (F12) (inactive and activated) (via amino acids 1-77). Interacts with host high molecular weight kininogen (KNG1) (via amino acids 402-532). Salivary gland (at protein level).

It is found in the secreted. Zn(2+) modulates binding to host coagulation factor XII (F12) and high molecular weight kininogen (KNG1). In terms of biological role, suppresses activation of the host plasma kallikrein-kinin system, leading to inhibition of the intrinsic coagulation pathway. Blocks host coagulation factor XII (F12) and prekallikrein (KLKB1) reciprocal activation without affecting their amidolytic activities. Blocks binding of host F12 and high molecular weight kininogen (KNG1) to negatively charged surfaces. Attenuates generation of bradykinin by interfering with activation of host kallikrein-kinin system. The polypeptide is Triafestin-1 (Triatoma infestans (Assassin bug)).